Here is a 124-residue protein sequence, read N- to C-terminus: Kinocilin (124 aa).

2 helical membrane-spanning segments follow: residues 13 to 33 (LQLA…GISV) and 40 to 60 (MGGV…YPFL). Positions 80–124 (PHPGADHGEGRSSTNGNKEGARSSLSTVSRTLEKLKPGTRGAEEC) are disordered. Polar residues predominate over residues 90-109 (RSSTNGNKEGARSSLSTVSR). A compositionally biased stretch (basic and acidic residues) spans 110-124 (TLEKLKPGTRGAEEC).

It is found in the membrane. May play a role in stabilizing dense microtubular networks or in vesicular trafficking. The protein is Kinocilin (KNCN) of Homo sapiens (Human).